We begin with the raw amino-acid sequence, 373 residues long: Stationary phase protein 5 (373 aa).

Required for survival at high temperature during stationary phase. The protein is Stationary phase protein 5 (SPG5) of Saccharomyces cerevisiae (strain ATCC 204508 / S288c) (Baker's yeast).